The chain runs to 540 residues: Light-independent protochlorophyllide reductase subunit B (540 aa).

D36 is a binding site for [4Fe-4S] cluster. The active-site Proton donor is the D292. Residue 428-429 (GL) coordinates substrate. Positions 451–490 (SNVASGVEPSTPSVSSEVSASSSASPEASAPTPSPDGDMV) are disordered. Positions 457–481 (VEPSTPSVSSEVSASSSASPEASAP) are enriched in low complexity.

The protein belongs to the ChlB/BchB/BchZ family. As to quaternary structure, protochlorophyllide reductase is composed of three subunits; BchL, BchN and BchB. Forms a heterotetramer of two BchB and two BchN subunits. Requires [4Fe-4S] cluster as cofactor.

It catalyses the reaction chlorophyllide a + oxidized 2[4Fe-4S]-[ferredoxin] + 2 ADP + 2 phosphate = protochlorophyllide a + reduced 2[4Fe-4S]-[ferredoxin] + 2 ATP + 2 H2O. It participates in porphyrin-containing compound metabolism; bacteriochlorophyll biosynthesis (light-independent). In terms of biological role, component of the dark-operative protochlorophyllide reductase (DPOR) that uses Mg-ATP and reduced ferredoxin to reduce ring D of protochlorophyllide (Pchlide) to form chlorophyllide a (Chlide). This reaction is light-independent. The NB-protein (BchN-BchB) is the catalytic component of the complex. The chain is Light-independent protochlorophyllide reductase subunit B from Chlorobium chlorochromatii (strain CaD3).